The primary structure comprises 513 residues: GMP synthase [glutamine-hydrolyzing] (513 aa).

Residues 8-198 enclose the Glutamine amidotransferase type-1 domain; that stretch reads MILVLDFGSQ…VFGVCECVGE (191 aa). Cys-85 serves as the catalytic Nucleophile. Residues His-172 and Glu-174 contribute to the active site. In terms of domain architecture, GMPS ATP-PPase spans 199–388; that stretch reads WSMENFIEIE…LGIPDEIVWR (190 aa). 226–232 contacts ATP; it reads SGGVDSS.

Homodimer.

It catalyses the reaction XMP + L-glutamine + ATP + H2O = GMP + L-glutamate + AMP + diphosphate + 2 H(+). The protein operates within purine metabolism; GMP biosynthesis; GMP from XMP (L-Gln route): step 1/1. In terms of biological role, catalyzes the synthesis of GMP from XMP. The chain is GMP synthase [glutamine-hydrolyzing] from Bacillus licheniformis (strain ATCC 14580 / DSM 13 / JCM 2505 / CCUG 7422 / NBRC 12200 / NCIMB 9375 / NCTC 10341 / NRRL NRS-1264 / Gibson 46).